Consider the following 579-residue polypeptide: Protein LYRIC (579 aa).

Over 1 to 48 (MAARSWQDELAQQAEEGSARLRELLSVGLGFLRTELGLDLGLEPKRYP) the chain is Lumenal. Residues 1–71 (MAARSWQDEL…LLLFLLGYGW (71 aa)) are activation of NF-kappa-B. Residues 49 to 69 (GWVILVGTGALGLLLLFLLGY) traverse the membrane as a helical segment. The Cytoplasmic segment spans residues 70 to 579 (GWAAACAGAR…KKKKKARRET (510 aa)). The interaction with BCCIP stretch occupies residues 72 to 168 (AAACAGARKK…EKSKKNKKKS (97 aa)). The tract at residues 78–222 (ARKKRRSPPR…SGSLDSTIPG (145 aa)) is disordered. Residues 100–204 (DDLAQLKNLR…ISHREKRQQR (105 aa)) form an interaction with RELA region. Residues 108–126 (LRSEEQKKKNRKKLPEKPK) are compositionally biased toward basic and acidic residues. Residues 159-168 (EKSKKNKKKS) are compositionally biased toward basic residues. Position 179 is a phosphoserine (Ser179). Positions 197–207 (HREKRQQRKRD) are enriched in basic residues. 2 positions are modified to phosphoserine: Ser215 and Ser250. Lys263 bears the N6-acetyllysine mark. The segment at 277-579 (NLTVNGGGWS…KKKKKARRET (303 aa)) is disordered. Phosphoserine is present on residues Ser297, Ser303, and Ser308. Residues 317 to 329 (SAWTQDTGDTNAN) show a composition bias toward polar residues. 2 positions are modified to phosphoserine: Ser341 and Ser366. 3 stretches are compositionally biased toward polar residues: residues 351-369 (EPVS…SRNQ), 380-391 (NGLSSADPSSDW), and 410-420 (LKSQEPISNDQ). Residues 378-440 (GLNGLSSADP…EGALPTGKSK (63 aa)) are lung-homing for mammary tumors. Phosphoserine occurs at positions 412 and 423. Positions 421–431 (KVSDDDKEKGE) are enriched in basic and acidic residues. Residues 438-448 (KSKKKKKKKKK) are compositionally biased toward basic residues. The span at 449 to 470 (QGEDNSHTQDTEDLEKDTREEL) shows a compositional bias: basic and acidic residues. Phosphoserine is present on residues Ser454, Ser475, Ser491, and Ser493. Composition is skewed to polar residues over residues 517–533 (PSIT…SSQV) and 546–565 (NAKQ…NWES). Ser565 bears the Phosphoserine mark. Residues 568–579 (QIKKKKKARRET) show a composition bias toward basic residues.

In terms of assembly, interacts with BCCIP, CREBBP/CBP and RELA/p65. As to expression, in the mammary gland, expressed at the apical surface of epithelial cells lining ducts, as well as in the mammary fat pad. Not detected in the spleen, kidney, lung, or skin; minute amounts seen in the liver. Expressed in Purkinje neurons in the early postnatal and adult cerebellum. Overexpressed in mammary tumors (at protein level).

It localises to the endoplasmic reticulum membrane. It is found in the nucleus membrane. Its subcellular location is the cell junction. The protein localises to the tight junction. The protein resides in the nucleus. It localises to the nucleolus. It is found in the cytoplasm. Its subcellular location is the perinuclear region. Its function is as follows. Down-regulates SLC1A2/EAAT2 promoter activity when expressed ectopically. Activates the nuclear factor kappa-B (NF-kappa-B) transcription factor. Promotes anchorage-independent growth of immortalized melanocytes and astrocytes which is a key component in tumor cell expansion. Promotes lung metastasis and also has an effect on bone and brain metastasis, possibly by enhancing the seeding of tumor cells to the target organ endothelium. Induces chemoresistance. This chain is Protein LYRIC (Mtdh), found in Mus musculus (Mouse).